Reading from the N-terminus, the 204-residue chain is Protease (204 aa).

Active-site residues include histidine 53, aspartate 70, and cysteine 121.

This sequence belongs to the peptidase C5 family. Interacts with protease cofactor pVI-C; this interaction is necessary for protease activation.

The protein localises to the virion. Its subcellular location is the host nucleus. It carries out the reaction Cleaves proteins of the adenovirus and its host cell at two consensus sites: -Yaa-Xaa-Gly-Gly-|-Xaa- and -Yaa-Xaa-Gly-Xaa-|-Gly- (in which Yaa is Met, Ile or Leu, and Xaa is any amino acid).. Requires DNA and protease cofactor for maximal activation. Inside nascent virions, becomes partially activated by binding to the viral DNA, allowing it to cleave the cofactor that binds to the protease and fully activates it. Actin, like the viral protease cofactor, seems to act as a cofactor in the cleavage of cytokeratin 18 and of actin itself. Cleaves viral precursor proteins (pTP, pIIIa, pVI, pVII, pVIII, and pX) inside newly assembled particles giving rise to mature virions. Protease complexed to its cofactor slides along the viral DNA to specifically locate and cleave the viral precursors. Mature virions have a weakened organization compared to the unmature virions, thereby facilitating subsequent uncoating. Without maturation, the particle lacks infectivity and is unable to uncoat. Late in adenovirus infection, in the cytoplasm, may participate in the cytoskeleton destruction. Cleaves host cell cytoskeletal keratins K7 and K18. This chain is Protease, found in Porcine adenovirus A serotype 3 (PAdV-3).